Here is a 136-residue protein sequence, read N- to C-terminus: 6,7-dimethyl-8-ribityllumazine synthase (136 aa).

Residues F11, 43–45, and 67–69 each bind 5-amino-6-(D-ribitylamino)uracil; these read VYD and CVI. 72 to 73 contributes to the (2S)-2-hydroxy-3-oxobutyl phosphate binding site; sequence DT. H75 functions as the Proton donor in the catalytic mechanism. L100 serves as a coordination point for 5-amino-6-(D-ribitylamino)uracil. R115 contributes to the (2S)-2-hydroxy-3-oxobutyl phosphate binding site.

This sequence belongs to the DMRL synthase family. In terms of assembly, forms an icosahedral capsid composed of 60 subunits, arranged as a dodecamer of pentamers.

It carries out the reaction (2S)-2-hydroxy-3-oxobutyl phosphate + 5-amino-6-(D-ribitylamino)uracil = 6,7-dimethyl-8-(1-D-ribityl)lumazine + phosphate + 2 H2O + H(+). It functions in the pathway cofactor biosynthesis; riboflavin biosynthesis; riboflavin from 2-hydroxy-3-oxobutyl phosphate and 5-amino-6-(D-ribitylamino)uracil: step 1/2. Catalyzes the formation of 6,7-dimethyl-8-ribityllumazine by condensation of 5-amino-6-(D-ribitylamino)uracil with 3,4-dihydroxy-2-butanone 4-phosphate. This is the penultimate step in the biosynthesis of riboflavin. The chain is 6,7-dimethyl-8-ribityllumazine synthase from Methanococcus aeolicus (strain ATCC BAA-1280 / DSM 17508 / OCM 812 / Nankai-3).